Reading from the N-terminus, the 201-residue chain is uncharacterized protein (201 aa).

Positions Met1–Ala25 are cleaved as a signal peptide. Residues Ala26–Ala170 are Extracellular-facing. N-linked (GlcNAc...) asparagine; by host glycosylation is found at Asn46, Asn49, Asn55, Asn84, Asn95, Asn113, Asn122, Asn137, and Asn144. Residues Phe171–Ile191 form a helical membrane-spanning segment. Residues Trp192–Arg201 are Cytoplasmic-facing.

This sequence belongs to the HHV-5 UL120 protein family.

Its subcellular location is the host membrane. This is an uncharacterized protein from Homo sapiens (Human).